Here is a 190-residue protein sequence, read N- to C-terminus: Tereporin-Ca1 (190 aa).

An N-terminal region region spans residues 2-21 (TAGSSLAGTTLSGLAASGYR). Residues Gly-78, Ser-96, Pro-98, Tyr-131, and Tyr-132 each contribute to the phosphocholine site. Positions 138–140 (KGE) match the Cell attachment site, crucial for protein stability motif.

Belongs to the actinoporin family. Conoidea subfamily. In terms of assembly, octamer or nonamer in membranes. Monomer in the soluble state. In terms of tissue distribution, expressed by the venom duct.

The protein resides in the secreted. The protein localises to the nematocyst. It is found in the target cell membrane. Functionally, pore-forming protein that forms pores of around 1 nm and causes cardiac stimulation and cytolysis. This Terebra anilis (Auger snail) protein is Tereporin-Ca1.